The sequence spans 238 residues: Succinate dehydrogenase iron-sulfur subunit (238 aa).

The 90-residue stretch at 8–97 folds into the 2Fe-2S ferredoxin-type domain; the sequence is YRYNPDVDDA…KIVIRPLPGL (90 aa). Residues cysteine 55, cysteine 60, and cysteine 75 each coordinate [2Fe-2S] cluster. Residues 139–169 form the 4Fe-4S ferredoxin-type domain; the sequence is QREKLDGLYECILCACCSTSCPSFWWNPDKF. Residues cysteine 149, cysteine 152, and cysteine 155 each coordinate [4Fe-4S] cluster. Residue cysteine 159 participates in [3Fe-4S] cluster binding. Tryptophan 164 contributes to the a ubiquinone binding site. The [3Fe-4S] cluster site is built by cysteine 206 and cysteine 212. Residue cysteine 216 coordinates [4Fe-4S] cluster.

Belongs to the succinate dehydrogenase/fumarate reductase iron-sulfur protein family. As to quaternary structure, part of an enzyme complex containing four subunits: a flavoprotein, an iron-sulfur, cytochrome b-556, and a hydrophobic anchor protein. The complex forms trimers. It depends on [2Fe-2S] cluster as a cofactor. [3Fe-4S] cluster serves as cofactor. [4Fe-4S] cluster is required as a cofactor.

The protein localises to the cell inner membrane. It catalyses the reaction a quinone + succinate = fumarate + a quinol. It participates in carbohydrate metabolism; tricarboxylic acid cycle; fumarate from succinate (bacterial route): step 1/1. Functionally, two distinct, membrane-bound, FAD-containing enzymes are responsible for the catalysis of fumarate and succinate interconversion; the fumarate reductase is used in anaerobic growth, and the succinate dehydrogenase is used in aerobic growth. The chain is Succinate dehydrogenase iron-sulfur subunit (sdhB) from Escherichia coli (strain K12).